The following is a 717-amino-acid chain: MKSALSVVVAAAGVQQASATFGLLGGGGISFNFGLDWSGAKTFPCPGNVVNKCTPEQENGWDWSDVATGSLNTYAGFNFGGGWSCESNFGKRGDIQGRTFGLGKVISGSCDQGDEAGLSIGVGASAGIDAFSIDSFDMSTEFDARLEFHYDMPDGSVCKQTSDCKRGGSTIVNKQCGGAKKVRVIYPKQIIHKGISFSKKCKISCHKIKWHCGKPTPKPSTSVLTLPSTSTKVIQTTPVTTLQTYTTPSQQTTTPEKETTSSKETTTSAQQTTPGKETTPAQQTTPSKETTPVQQTTSGKETTPAQQTTPGKETTSSQETTSAHQTTPGKETTPAQQTTPGKETTPAQQTTPGKETTPAQQTTPGKETTPAQQTTPGQQTTPSQPTTAATTTPATTFVTTYDTTSTVYTTSTKTITSCGPEVTDCPGKTGPHIVTVTIPVSTTICPVTETRTQSQGVPTTVILPSKSETTVKEQPTPEQPTPEQPTGEKPNPVTSQPPQSTQTPPCPPVVPRCLNTFVDLKAKCADNKDASCFCPDKDFVKNIFDCIYAHGESDNIISEAISFFQGICGRYIPENPVIATGAETITQIITVTGTPHITQVPYTTVVVATTITENSSTQTISTEVTIPNIVMPTPTGGVPNQPPATASVPAGQNPPPVTGQNPPPAVTDQSPPPAITTGTGGVIPPKPTGSVPVTAGSGRVGAGLGMVLAVAAFVAAL.

The N-terminal stretch at 1-19 (MKSALSVVVAAAGVQQASA) is a signal peptide. 2 stretches are compositionally biased toward low complexity: residues 237-254 (TPVT…QTTT) and 262-274 (SKET…QTTP). 2 disordered regions span residues 237–392 (TPVT…ATTT) and 451–506 (RTQS…TPPC). A run of 8 repeats spans residues 275–286 (GKETTPAQQTTP), 287–298 (SKETTPVQQTTS), 299–310 (GKETTPAQQTTP), 311–328 (GKET…QTTP), 329–340 (GKETTPAQQTTP), 341–352 (GKETTPAQQTTP), 353–364 (GKETTPAQQTTP), and 365–376 (GKETTPAQQTTP). Over residues 275–366 (GKETTPAQQT…TPAQQTTPGK (92 aa)) the composition is skewed to polar residues. 2 stretches are compositionally biased toward low complexity: residues 368 to 392 (TTPA…ATTT) and 484 to 503 (QPTG…STQT). The CFEM domain occupies 481–595 (TPEQPTGEKP…TQIITVTGTP (115 aa)). Disulfide bonds link Cys513/Cys546, Cys524/Cys532, and Cys534/Cys568. Asp529 is a heme binding site. N-linked (GlcNAc...) asparagine glycosylation is present at Asn614. Residues 632-690 (PTPTGGVPNQPPATASVPAGQNPPPVTGQNPPPAVTDQSPPPAITTGTGGVIPPKPTGS) are disordered. The span at 652–674 (QNPPPVTGQNPPPAVTDQSPPPA) shows a compositional bias: pro residues. Ala695 is lipidated: GPI-anchor amidated alanine. Positions 696–717 (GSGRVGAGLGMVLAVAAFVAAL) are cleaved as a propeptide — removed in mature form.

The protein belongs to the RBT5 family. The GPI-anchor is attached to the protein in the endoplasmic reticulum and serves to target the protein to the cell surface. There, the glucosamine-inositol phospholipid moiety is cleaved off and the GPI-modified mannoprotein is covalently attached via its lipidless GPI glycan remnant to the 1,6-beta-glucan of the outer cell wall layer.

It localises to the secreted. It is found in the cell wall. The protein resides in the cell membrane. Cell surface adhesion protein that plays a key role in virulence by allowing adherence to the insect host surface. Required to orientate the cytoskeleton and stimulate the expression of genes involved in the cell cycle. Is also involved in achieving the septin hourglass shape and subsequent separation of cells. The polypeptide is Adhesion cell surface protein MAD1 (Metarhizium anisopliae (Entomophthora anisopliae)).